We begin with the raw amino-acid sequence, 504 residues long: Pre-mRNA-processing factor 19 (504 aa).

N-acetylserine is present on Ser2. The region spanning 2 to 73 is the U-box domain; sequence SLICSISNEV…KPPSATSIPA (72 aa). The interval 68–223 is may mediate interaction with PSMC5; that stretch reads ATSIPAILKA…VGLHSASIPG (156 aa). N6-acetyllysine occurs at positions 122, 179, 244, and 261. The WD 1 repeat unit spans residues 219–259; that stretch reads ASIPGILALDLCPSDTNKILTGGADKNVVVFDKSSEQILAT. 6 WD repeats span residues 262-301, 304-345, 348-387, 390-429, 433-472, and 473-503; these read GHTK…CVQV, AHES…TKVT, TSGC…NVAN, GHSG…NFKT, DNNF…LHFT, and EHSG…KFYS.

The protein belongs to the WD repeat PRP19 family. Homotetramer. Component of activated, catalytic and post-catalytic spliceosomes. Component of the Prp19 complex/PRP19C/Nineteen complex/NTC and related complexes described as PRP19-CDC5L splicing complex and PSO4 complex. A homotetramer of PRPF19, CDC5L, PLRG1 and BCAS2 constitute the core of those complexes. The interaction with CDC5L, PLRG1 and BCAS2 is direct within this core complex. At least three less stably associated proteins CTNNBL1, CWC15 and HSPA8 are found in the Prp19 complex. The Prp19 complex associates with the spliceosome during its assembly and remodeling recruiting additional proteins. Component of the XAB2 complex, a multimeric protein complex composed of XAB2, PRPF19, AQR, ZNF830, ISY1, and PPIE. Interacts with CWC22 and EIF4A3 in an RNA-independent manner. Interacts with RPA1 and RPA2; the PRP19-CDC5L complex is recruited to the sites of DNA repair where it interacts with the replication protein A complex (RPA). Interacts with SETMAR; required for SETMAR recruitment to site of DNA damage. Interacts with U2AF2; the interaction is direct and recruits the Prp19 complex to RNA polymerase II C-terminal domain (CTD) and the pre-mRNA. Interacts with PRPF3. Interacts with APEX1, DNTT and PSMB4. Interacts with PSMC5. Interacts with KNSTRN. Interacts (via N-terminus) with CDC5L. Interacts with KHDC4. Interacts with USB1. Interacts with DDX41. In terms of tissue distribution, ubiquitous. Weakly expressed in senescent cells of different tissue origins. Highly expressed in tumor cell lines.

The protein resides in the nucleus. It localises to the nucleoplasm. It is found in the cytoplasm. The protein localises to the cytoskeleton. Its subcellular location is the spindle. The protein resides in the lipid droplet. The enzyme catalyses S-ubiquitinyl-[E2 ubiquitin-conjugating enzyme]-L-cysteine + [acceptor protein]-L-lysine = [E2 ubiquitin-conjugating enzyme]-L-cysteine + N(6)-ubiquitinyl-[acceptor protein]-L-lysine.. Its pathway is protein modification; protein ubiquitination. Functionally, ubiquitin-protein ligase which is a core component of several complexes mainly involved pre-mRNA splicing and DNA repair. Required for pre-mRNA splicing as component of the spliceosome. Core component of the PRP19C/Prp19 complex/NTC/Nineteen complex which is part of the spliceosome and participates in its assembly, its remodeling and is required for its activity. During assembly of the spliceosome, mediates 'Lys-63'-linked polyubiquitination of the U4 spliceosomal protein PRPF3. Ubiquitination of PRPF3 allows its recognition by the U5 component PRPF8 and stabilizes the U4/U5/U6 tri-snRNP spliceosomal complex. Recruited to RNA polymerase II C-terminal domain (CTD) and the pre-mRNA, it may also couple the transcriptional and spliceosomal machineries. The XAB2 complex, which contains PRPF19, is also involved in pre-mRNA splicing, transcription and transcription-coupled repair. Beside its role in pre-mRNA splicing PRPF19, as part of the PRP19-CDC5L complex, plays a role in the DNA damage response/DDR. It is recruited to the sites of DNA damage by the RPA complex where PRPF19 directly ubiquitinates RPA1 and RPA2. 'Lys-63'-linked polyubiquitination of the RPA complex allows the recruitment of the ATR-ATRIP complex and the activation of ATR, a master regulator of the DNA damage response. May also play a role in DNA double-strand break (DSB) repair by recruiting the repair factor SETMAR to altered DNA. As part of the PSO4 complex may also be involved in the DNA interstrand cross-links/ICLs repair process. In addition, may also mediate 'Lys-48'-linked polyubiquitination of substrates and play a role in proteasomal degradation. May play a role in the biogenesis of lipid droplets. May play a role in neural differentiation possibly through its function as part of the spliceosome. This Homo sapiens (Human) protein is Pre-mRNA-processing factor 19.